A 472-amino-acid chain; its full sequence is Glutamate--tRNA ligase (472 aa).

A 'HIGH' region motif is present at residues 9-19 (PSPTGYLHVGG). Zn(2+) is bound by residues Cys-98, Cys-100, Cys-125, and His-127. A 'KMSKS' region motif is present at residues 237 to 241 (KLSKR). Lys-240 provides a ligand contact to ATP.

This sequence belongs to the class-I aminoacyl-tRNA synthetase family. Glutamate--tRNA ligase type 1 subfamily. In terms of assembly, monomer. Zn(2+) is required as a cofactor.

The protein resides in the cytoplasm. It catalyses the reaction tRNA(Glu) + L-glutamate + ATP = L-glutamyl-tRNA(Glu) + AMP + diphosphate. In terms of biological role, catalyzes the attachment of glutamate to tRNA(Glu) in a two-step reaction: glutamate is first activated by ATP to form Glu-AMP and then transferred to the acceptor end of tRNA(Glu). In Klebsiella pneumoniae (strain 342), this protein is Glutamate--tRNA ligase.